The primary structure comprises 202 residues: Tumor necrosis factor alpha-induced protein 8-like protein 3 (202 aa).

A compositionally biased stretch (acidic residues) spans Met-1–Glu-10. The segment at Met-1–Ser-24 is disordered.

This sequence belongs to the TNFAIP8 family.

Its subcellular location is the cytoplasm. The protein resides in the cell membrane. Its function is as follows. May act as a lipid transfer protein. The protein is Tumor necrosis factor alpha-induced protein 8-like protein 3 (tnfaip8l3) of Xenopus laevis (African clawed frog).